The chain runs to 85 residues: Putative defensin-like protein 142 (85 aa).

A signal peptide spans 1-24 (MKKSFLFTFTVLTIFTILVIGVAP). 4 cysteine pairs are disulfide-bonded: C30-C78, C41-C63, C46-C73, and C50-C75.

Belongs to the DEFL family.

It localises to the secreted. In Arabidopsis thaliana (Mouse-ear cress), this protein is Putative defensin-like protein 142 (LCR34).